We begin with the raw amino-acid sequence, 579 residues long: Fatty-acid amide hydrolase 1 (579 aa).

Residues Thr-9–Leu-29 traverse the membrane as a helical segment. At Arg-30–Asp-403 the chain is on the cytoplasmic side. Lys-142 serves as the catalytic Charge relay system. Residues Met-191, Ser-217, and Ile-238 to Ser-241 contribute to the substrate site. Ser-217 functions as the Charge relay system in the catalytic mechanism. Ser-241 acts as the Acyl-ester intermediate in catalysis. Ser-241 carries the phosphoserine modification. An intramembrane segment occupies Leu-404–Leu-433. The Cytoplasmic portion of the chain corresponds to Asn-434 to Ser-579.

It belongs to the amidase family. As to quaternary structure, homodimer. Found in neuronal cells throughout the CNS. Expressed in liver and brain, and to a lesser extent in spleen, lung, kidney and testes.

It is found in the endoplasmic reticulum membrane. Its subcellular location is the golgi apparatus membrane. It catalyses the reaction N-(5Z,8Z,11Z,14Z-eicosatetraenoyl)-ethanolamine + H2O = ethanolamine + (5Z,8Z,11Z,14Z)-eicosatetraenoate. It carries out the reaction (9Z)-octadecenamide + H2O = (9Z)-octadecenoate + NH4(+). The enzyme catalyses 2-(5Z,8Z,11Z,14Z-eicosatetraenoyl)-glycerol + H2O = glycerol + (5Z,8Z,11Z,14Z)-eicosatetraenoate + H(+). The catalysed reaction is (9Z,12Z,15Z)-octadecatrienamide + H2O = (9Z,12Z,15Z)-octadecatrienoate + NH4(+). It catalyses the reaction (5Z,8Z,11Z,14Z)-eicosatetraenamide + H2O = (5Z,8Z,11Z,14Z)-eicosatetraenoate + NH4(+). It carries out the reaction (6Z)-octadecenamide + H2O = (6Z)-octadecenoate + NH4(+). The enzyme catalyses (15Z)-tetracosenamide + H2O = (15Z)-tetracosenoate + NH4(+). The catalysed reaction is (8Z,11Z,14Z)-eicosatrienamide + H2O = (8Z,11Z,14Z)-eicosatrienoate + NH4(+). It catalyses the reaction (11Z,14Z,17Z)-eicosatrienamide + H2O = (11Z,14Z,17Z)-eicosatrienoate + NH4(+). It carries out the reaction (11Z,14Z)-eicosadienamide + H2O = (11Z,14Z)-eicosadienoate + NH4(+). The enzyme catalyses (9Z,12Z)-octadecadienamide + H2O = (9Z,12Z)-octadecadienoate + NH4(+). The catalysed reaction is tetradecamide + H2O = tetradecanoate + NH4(+). It catalyses the reaction N-(9Z-octadecenoyl) ethanolamine + H2O = ethanolamine + (9Z)-octadecenoate. It carries out the reaction N-(9Z-octadecenoyl)-taurine + H2O = taurine + (9Z)-octadecenoate. The enzyme catalyses 1-O-methyl-(5Z,8Z,11Z,14Z)-eicosatetraenoate + H2O = methanol + (5Z,8Z,11Z,14Z)-eicosatetraenoate + H(+). The catalysed reaction is (11Z)-eicosenamide + H2O = (11Z)-eicosenoate + NH4(+). It catalyses the reaction N-(9Z-hexadecenoyl) ethanolamine + H2O = (9Z)-hexadecenoate + ethanolamine. It carries out the reaction N-octadecanoyl ethanolamine + H2O = octadecanoate + ethanolamine. The enzyme catalyses N-docosanoyl-ethanolamine + H2O = docosanoate + ethanolamine. The catalysed reaction is N-tetracosanoyl-taurine + H2O = tetracosanoate + taurine. It catalyses the reaction N-(15Z-tetracosenoyl)-ethanolamine + H2O = (15Z)-tetracosenoate + ethanolamine. It carries out the reaction N-docosanoyl-taurine + H2O = docosanoate + taurine. The enzyme catalyses N-(15Z-tetracosenoyl)-taurine + H2O = (15Z)-tetracosenoate + taurine. The catalysed reaction is N-tricosanoyl-taurine + H2O = tricosanoate + taurine. It catalyses the reaction (9Z)-octadecenoate + glycine = N-(9Z-octadecenoyl)glycine + H2O. It carries out the reaction N-(5Z,8Z,11Z,14Z)-eicosatetraenoyl-glycine + H2O = (5Z,8Z,11Z,14Z)-eicosatetraenoate + glycine. The enzyme catalyses N-(5Z,8Z,11Z,14Z-eicosatetraenoyl)-L-serine + H2O = (5Z,8Z,11Z,14Z)-eicosatetraenoate + L-serine. Its activity is regulated as follows. inhibited by trifluoromethyl ketone. Its function is as follows. Catalyzes the hydrolysis of endogenous amidated lipids like the sleep-inducing lipid oleamide ((9Z)-octadecenamide), the endocannabinoid anandamide (N-(5Z,8Z,11Z,14Z-eicosatetraenoyl)-ethanolamine), as well as other fatty amides, to their corresponding fatty acids, thereby regulating the signaling functions of these molecules. Hydrolyzes polyunsaturated substrate anandamide preferentially as compared to monounsaturated substrates. It can also catalyze the hydrolysis of the endocannabinoid 2-arachidonoylglycerol (2-(5Z,8Z,11Z,14Z-eicosatetraenoyl)-glycerol). FAAH cooperates with PM20D1 in the hydrolysis of amino acid-conjugated fatty acids such as N-fatty acyl glycine and N-fatty acyl-L-serine, thereby acting as a physiological regulator of specific subsets of intracellular, but not of extracellular, N-fatty acyl amino acids. This is Fatty-acid amide hydrolase 1 (Faah) from Rattus norvegicus (Rat).